The sequence spans 88 residues: Small ribosomal subunit protein bS20 (88 aa).

It belongs to the bacterial ribosomal protein bS20 family.

Binds directly to 16S ribosomal RNA. This chain is Small ribosomal subunit protein bS20, found in Blochmanniella floridana.